Reading from the N-terminus, the 222-residue chain is MKQPLILSFLLLGMVSAFHLETAHLENPKREESLKQEADGSREQGRELALTQETKQTEGEEVEGSQHQDIFEDEEAMESDPDALNKDSACPKEEDTTHFQGTPGCKSCNYVLVRTPETFDKAQRVCRRCYRGNLASVHSYSFNYQIQNLARKINQSIVWIGGILRGWFWKKFCWMDGSCWDFGYWAPGQPGSGGGHCVTLCTKGGHWRRASCKSHLPFICSF.

Positions 1–17 (MKQPLILSFLLLGMVSA) are cleaved as a signal peptide. Residues 27–46 (NPKREESLKQEADGSREQGR) show a composition bias toward basic and acidic residues. Residues 27-100 (NPKREESLKQ…PKEEDTTHFQ (74 aa)) form a disordered region. Positions 71–81 (FEDEEAMESDP) are enriched in acidic residues. Residues 83-97 (ALNKDSACPKEEDTT) show a composition bias toward basic and acidic residues. Residues 105–221 (CKSCNYVLVR…CKSHLPFICS (117 aa)) form the C-type lectin domain. Cystine bridges form between Cys-126–Cys-220 and Cys-197–Cys-212.

As to expression, expressed in bone marrow, spleen, and thymus. Not detected in heart, liver or lung.

Functionally, possesses similar cytotoxic and cytostimulatory activities to PRG2/MBP. The sequence is that of Proteoglycan 3 from Mus musculus (Mouse).